A 127-amino-acid chain; its full sequence is Modulator protein MzrA (127 aa).

Over 1–9 (MQLPRVTLR) the chain is Cytoplasmic. Residues 10-32 (QMTWTTSAIVLLGITLLLWSAFR) traverse the membrane as a helical segment. Topologically, residues 33 to 127 (HQESTLAIRA…LLRDTSHRFG (95 aa)) are periplasmic.

The protein belongs to the MzrA family. In terms of assembly, interacts with EnvZ.

It localises to the cell inner membrane. Modulates the activity of the EnvZ/OmpR two-component regulatory system, probably by directly modulating EnvZ enzymatic activity and increasing stability of phosphorylated OmpR. In Escherichia fergusonii (strain ATCC 35469 / DSM 13698 / CCUG 18766 / IAM 14443 / JCM 21226 / LMG 7866 / NBRC 102419 / NCTC 12128 / CDC 0568-73), this protein is Modulator protein MzrA.